The following is a 640-amino-acid chain: LRR receptor kinase SERL2 (640 aa).

The first 22 residues, 1 to 22 (MEPPFFLLLLLLVVSSSSPSAA), serve as a signal peptide directing secretion. Residues 23–241 (LLSAKGVNNE…AARDRGHKFA (219 aa)) are Extracellular-facing. 2 N-linked (GlcNAc...) asparagine glycosylation sites follow: asparagine 94 and asparagine 107. LRR repeat units lie at residues 95 to 119 (LTNLETVLLQNNNITGPIPAEIGRL), 120 to 143 (ENLKTLDLSSNSFYGEIPSSVGHL), 145 to 167 (SLQYLRLNNNTLSGPFPSASANL), and 168 to 191 (SHLVFLDLSYNNLSGPIPESLART). 4 N-linked (GlcNAc...) asparagine glycosylation sites follow: asparagine 153, asparagine 166, asparagine 179, and asparagine 222. Residues 242–262 (VAFGSTAGCMGLLLLAAGFLF) form a helical membrane-spanning segment. Residues 263-640 (WWRHRRNRQI…VQAVELSGPR (378 aa)) are Cytoplasmic-facing. One can recognise a Protein kinase domain in the interval 304–583 (FSGKNILGKG…EGDGLADRWE (280 aa)). Residues 310 to 318 (LGKGGFGNV) and lysine 332 contribute to the ATP site. The active-site Proton acceptor is aspartate 427.

It belongs to the protein kinase superfamily. Ser/Thr protein kinase family. Interacts with MSBP1.

It localises to the cell membrane. It catalyses the reaction L-seryl-[protein] + ATP = O-phospho-L-seryl-[protein] + ADP + H(+). The enzyme catalyses L-threonyl-[protein] + ATP = O-phospho-L-threonyl-[protein] + ADP + H(+). LRR receptor kinase that may be involved in defense response. The polypeptide is LRR receptor kinase SERL2 (Oryza sativa subsp. japonica (Rice)).